The following is a 129-amino-acid chain: uncharacterized protein (129 aa).

This is an uncharacterized protein from Sinorhizobium fredii (strain NBRC 101917 / NGR234).